The primary structure comprises 299 residues: Oxygen-dependent coproporphyrinogen-III oxidase (299 aa).

Ser-92 lines the substrate pocket. A divalent metal cation is bound by residues His-96 and His-106. The active-site Proton donor is His-106. 108 to 110 (NVR) is a substrate binding site. Positions 145 and 175 each coordinate a divalent metal cation. The interval 239-274 (YVEFNLVYDRGTLFGLQSGGRAESILMSLPPQVRWE) is important for dimerization. 257-259 (GGR) contributes to the substrate binding site.

It belongs to the aerobic coproporphyrinogen-III oxidase family. Homodimer. It depends on a divalent metal cation as a cofactor.

It localises to the cytoplasm. The enzyme catalyses coproporphyrinogen III + O2 + 2 H(+) = protoporphyrinogen IX + 2 CO2 + 2 H2O. Its pathway is porphyrin-containing compound metabolism; protoporphyrin-IX biosynthesis; protoporphyrinogen-IX from coproporphyrinogen-III (O2 route): step 1/1. In terms of biological role, involved in the heme biosynthesis. Catalyzes the aerobic oxidative decarboxylation of propionate groups of rings A and B of coproporphyrinogen-III to yield the vinyl groups in protoporphyrinogen-IX. The chain is Oxygen-dependent coproporphyrinogen-III oxidase from Xanthomonas campestris pv. campestris (strain 8004).